We begin with the raw amino-acid sequence, 534 residues long: MDTTAEENALRREIVKTFQIHAFELKKEAVKLCVKLFLDHDKETRKKWTNKMIELLKKQTLQSSLISEELIRDTFRQCKSKGTQDAGKLLNVFDAFSLQPYDFDADLRKMVLRKEKTSLAADSSSFSHAARQRFFIVKQRAMRCASLKNFKFTTCEILGSSTKHLQSVVVLGMLTQQKADCYHIEDLSGSVEVEFKEDTKFHHALFHEHSIAIFEGTFENSVLTVNEVAMVPVESAEVTRKELSSNENWFGGDDKIAFRCSDRLRSALAKQEDTSLVFLSDVFLDDKKVMKAVFKLLQGYKDQPPVAIVFCGNFCSRPRQTDTIDLLDRGFRWLANQLTPLRKDYEKTQFIFVPGPDDPFVDTVLPRPHLPSLLFKHISPIISCTFASNPCRIQFASQEIVVFRSDLIKKTCRHSINSITVESIPSRYARSVLSQAHLCPLPQHITPVLPDFSHSLSLHPLPDLLITADRFETFTEKVVGADTIVSNPGSFSRSNYTFHVYYPCQNRVEASQIPVSELDDHSNIKNVIIFFFLF.

The protein belongs to the DNA polymerase epsilon subunit B family. Consists of four subunits.

The protein localises to the nucleus. Accessory component of the DNA polymerase epsilon complex. Participates in DNA repair and in chromosomal DNA replication. The protein is Probable DNA polymerase epsilon subunit 2 (pole-2) of Caenorhabditis elegans.